The primary structure comprises 543 residues: Ipecac alkaloid beta-glucosidase 2 (543 aa).

Residues Gln-36, His-140, 185–186, Tyr-350, Glu-422, Trp-471, and Phe-487 contribute to the a beta-D-glucoside site; that span reads NE. Glu-186 serves as the catalytic Proton donor. The active-site Nucleophile is the Glu-422.

This sequence belongs to the glycosyl hydrolase 1 family.

The protein resides in the cytoplasm. The protein localises to the cytosol. It catalyses the reaction deacetylipecoside + H2O = deacetylipecoside aglycone + D-glucose. The enzyme catalyses deacetylisoipecoside + H2O = deacetylisoipecoside aglycone + D-glucose. Its pathway is alkaloid biosynthesis. Functionally, beta-glucosidase catalyzing deglucosylation on N-deacetylisoipecoside and N-deacetylipecoside. The protein is Ipecac alkaloid beta-glucosidase 2 of Carapichea ipecacuanha (Ipecac).